A 605-amino-acid chain; its full sequence is Elongation factor 4 (605 aa).

Residues 11 to 193 (KCIRNFSIIA…QIVTRISPPQ (183 aa)) form the tr-type G domain. GTP is bound by residues 23–28 (DHGKST) and 140–143 (NKVD).

Belongs to the TRAFAC class translation factor GTPase superfamily. Classic translation factor GTPase family. LepA subfamily.

It localises to the cell membrane. It catalyses the reaction GTP + H2O = GDP + phosphate + H(+). Required for accurate and efficient protein synthesis under certain stress conditions. May act as a fidelity factor of the translation reaction, by catalyzing a one-codon backward translocation of tRNAs on improperly translocated ribosomes. Back-translocation proceeds from a post-translocation (POST) complex to a pre-translocation (PRE) complex, thus giving elongation factor G a second chance to translocate the tRNAs correctly. Binds to ribosomes in a GTP-dependent manner. This chain is Elongation factor 4, found in Aster yellows witches'-broom phytoplasma (strain AYWB).